Reading from the N-terminus, the 92-residue chain is Secreted RxLR effector protein 21 (92 aa).

An N-terminal signal peptide occupies residues 1 to 21 (MNLSTLLLTLACISQLHGGSA). A RxLR motif is present at residues 30–33 (RQLR).

The protein belongs to the RxLR effector family.

Its subcellular location is the secreted. The protein localises to the host nucleus. The protein resides in the host cytoplasm. Its function is as follows. Secreted effector that completely suppresses the host cell death induced by cell death-inducing proteins. The protein is Secreted RxLR effector protein 21 of Plasmopara viticola (Downy mildew of grapevine).